The following is a 253-amino-acid chain: Lys-63-specific deubiquitinase BRCC36 (253 aa).

Positions Val9–Phe145 constitute an MPN domain. Zn(2+) contacts are provided by His94, His96, and Asp107. The JAMM motif motif lies at His94–Asp107. Residues Glu227–Lys249 are a coiled coil.

The protein belongs to the peptidase M67A family. BRCC36 subfamily. Component of the BRISC complex, at least composed of ABRAXAS2, BRCC3/BRCC36, BABAM2 and BABAM1/NBA1. Within the complex, interacts directly with ABRAXAS2. The heterodimer with ABRAXAS2 assembles into a heterotetramer. The BRISC complex binds polyubiquitin. Zn(2+) is required as a cofactor.

It localises to the cytoplasm. It is found in the nucleus. Its subcellular location is the cytoskeleton. The protein localises to the spindle pole. Its function is as follows. Metalloprotease that specifically cleaves 'Lys-63'-linked polyubiquitin chains, leaving the last ubiquitin chain attached to its substrates. Catalytic subunit of the BRISC complex; does not have activity by itself, but needs to be associated into a heterotetramer with ABRAXAS2 for minimal in vitro activity. Plays a role in regulating the onset of apoptosis via its role in modulating 'Lys-63'-linked ubiquitination of target proteins. Required for normal mitotic spindle assembly and microtubule attachment to kinetochores via its role in deubiquitinating spindle assembly factors. The sequence is that of Lys-63-specific deubiquitinase BRCC36 from Camponotus floridanus (Florida carpenter ant).